The primary structure comprises 669 residues: Cytokinesis protein 2 (669 aa).

An F-BAR domain is found at 1-261; it reads MSYSYEACFW…HLNSFTAADE (261 aa). Residues 134–200 adopt a coiled-coil conformation; the sequence is KKGCEVLQKK…LKQEYKASQK (67 aa). Residues Ser-337 and Ser-366 each carry the phosphoserine modification. The tract at residues 372-518 is disordered; that stretch reads VQLQSNVDDS…DYNTRRDTST (147 aa). Basic and acidic residues-rich tracts occupy residues 381–391 and 397–413; these read SVLRQKPDKPR and EQLK…EKGL. At Ser-421 the chain carries Phosphoserine. Low complexity-rich tracts occupy residues 421–431 and 445–455; these read SLSSPSESSSS and MESMTTSVSSM. In terms of domain architecture, SH3 spans 599–667; sequence PVIEYAKAMY…PYNFIQLLHQ (69 aa).

In terms of assembly, interacts with INN1.

It localises to the cytoplasm. It is found in the cytoskeleton. The protein resides in the bud neck. Throughout most of the cell cycle it forms a double ring that coincides with the septins. After the onset of mitosis, forms a ring-like structure which colocalizes with the medial actin ring. Mediates cytoskeletal rearrangements required for cytokinesis. In conjunction with the medial actin ring exhibits contraction-like action. This is Cytokinesis protein 2 (HOF1) from Saccharomyces cerevisiae (strain ATCC 204508 / S288c) (Baker's yeast).